Consider the following 196-residue polypeptide: Oocyte zinc finger protein XlCOF26 (196 aa).

7 C2H2-type zinc fingers span residues 6 to 28 (YSCT…QKNH), 34 to 56 (FTCT…QRIH), 62 to 84 (FTCT…QRIH), 90 to 112 (FTCT…HKIH), 118 to 140 (FTCP…QRTH), 146 to 168 (FTCT…QSTH), and 174 to 196 (FTCT…QMTH).

This sequence belongs to the krueppel C2H2-type zinc-finger protein family.

The protein resides in the nucleus. Functionally, may be involved in transcriptional regulation. This chain is Oocyte zinc finger protein XlCOF26, found in Xenopus laevis (African clawed frog).